Reading from the N-terminus, the 575-residue chain is Alpha-(1,6)-fucosyltransferase (575 aa).

The Cytoplasmic portion of the chain corresponds to 1-9 (MRAWTGSWR). The helical; Signal-anchor for type II membrane protein transmembrane segment at 10–30 (WIMLILFAWGTLLFYIGGHLV) threads the bilayer. Topologically, residues 31–575 (RDNDHPDHSS…KYPTYPEAEK (545 aa)) are lumenal. Disulfide bonds link C204-C266, C212-C230, and C218-C222. Positions 206-493 (KARKLVCNIN…PDASANFHSL (288 aa)) constitute a GT23 domain. S278 carries the post-translational modification Phosphoserine. The SH3-binding motif lies at 299 to 305 (PRPPYLP). An important for donor substrate binding region spans residues 365-366 (RR). C465 and C472 are joined by a disulfide. The SH3 domain maps to 502-563 (QNAHNQIAVY…PSYKVREKIE (62 aa)).

The protein belongs to the glycosyltransferase 23 family. Post-translationally, tyrosine phosphorylated by PKDCC/VLK.

It localises to the golgi apparatus. The protein resides in the golgi stack membrane. It carries out the reaction N(4)-{beta-D-GlcNAc-(1-&gt;2)-alpha-D-Man-(1-&gt;3)-[beta-D-GlcNAc-(1-&gt;2)-alpha-D-Man-(1-&gt;6)]-beta-D-Man-(1-&gt;4)-beta-D-GlcNAc-(1-&gt;4)-beta-D-GlcNAc}-L-asparaginyl-[protein] + GDP-beta-L-fucose = an N(4)-{beta-D-GlcNAc-(1-&gt;2)-alpha-D-Man-(1-&gt;3)-[beta-D-GlcNAc-(1-&gt;2)-alpha-D-Man-(1-&gt;6)]-beta-D-Man-(1-&gt;4)-beta-D-GlcNAc-(1-&gt;4)-[alpha-L-Fuc-(1-&gt;6)]-beta-D-GlcNAc}-L-asparaginyl-[protein] + GDP + H(+). It functions in the pathway protein modification; protein glycosylation. Catalyzes the addition of fucose in alpha 1-6 linkage to the first GlcNAc residue, next to the peptide chains in N-glycans. The sequence is that of Alpha-(1,6)-fucosyltransferase (Fut8) from Mus musculus (Mouse).